The following is a 242-amino-acid chain: Ubiquitin-conjugating enzyme E2 6 (242 aa).

The Cytoplasmic segment spans residues 1–220 (MASRQSQKRL…HSTPSFGVQR (220 aa)). Positions 5-156 (QSQKRLTKEY…NQRFTKQFPD (152 aa)) constitute a UBC core domain. Catalysis depends on cysteine 87, which acts as the Glycyl thioester intermediate. Residues 170–190 (AREQAAATTDSTDPEKPFDVR) form a disordered region. Residues 221–240 (FTLVGVVVAAFIAAYFNFFS) traverse the membrane as a helical segment.

Belongs to the ubiquitin-conjugating enzyme family.

The protein resides in the endoplasmic reticulum membrane. It carries out the reaction S-ubiquitinyl-[E1 ubiquitin-activating enzyme]-L-cysteine + [E2 ubiquitin-conjugating enzyme]-L-cysteine = [E1 ubiquitin-activating enzyme]-L-cysteine + S-ubiquitinyl-[E2 ubiquitin-conjugating enzyme]-L-cysteine.. It participates in protein modification; protein ubiquitination. In terms of biological role, catalyzes the covalent attachment of ubiquitin to other proteins. Functions in degradation of misfolded or regulated proteins localized in the endoplasmic reticulum (ER) lumen or membrane via the ubiquitin-proteasome system. Cognate E2 conjugating enzyme for the DOA10 ubiquitin ligase complex, which is part of the ERAD-C pathway responsible for the rapid degradation of membrane proteins with misfolded cytoplasmic domains. This chain is Ubiquitin-conjugating enzyme E2 6 (UBC6), found in Debaryomyces hansenii (strain ATCC 36239 / CBS 767 / BCRC 21394 / JCM 1990 / NBRC 0083 / IGC 2968) (Yeast).